The chain runs to 174 residues: MLAVERFGVNGRDIWIGVIFHGRIQGISFAFTRGELLERIRNLAEFLRGRDVRVSLDVQPSNYTELVYRVLIGELENEKALPELSFEGVTPFERRVYEWLTKNVKRGTVITYGSLAKALETSPRAVGGAMKRNPYPIIVPCHRVVSREGIGHYNLGIEEKKFLLELEGVKEWTG.

Cys-141 serves as the catalytic Nucleophile; methyl group acceptor.

Belongs to the MGMT family.

It is found in the cytoplasm. It catalyses the reaction a 6-O-methyl-2'-deoxyguanosine in DNA + L-cysteinyl-[protein] = S-methyl-L-cysteinyl-[protein] + a 2'-deoxyguanosine in DNA. The enzyme catalyses a 4-O-methyl-thymidine in DNA + L-cysteinyl-[protein] = a thymidine in DNA + S-methyl-L-cysteinyl-[protein]. Involved in the cellular defense against the biological effects of O6-methylguanine (O6-MeG) and O4-methylthymine (O4-MeT) in DNA. Repairs the methylated nucleobase in DNA by stoichiometrically transferring the methyl group to a cysteine residue in the enzyme. This is a suicide reaction: the enzyme is irreversibly inactivated. The polypeptide is Methylated-DNA--protein-cysteine methyltransferase (Thermococcus gammatolerans (strain DSM 15229 / JCM 11827 / EJ3)).